A 156-amino-acid polypeptide reads, in one-letter code: Small ribosomal subunit protein uS7 (156 aa).

Belongs to the universal ribosomal protein uS7 family. Part of the 30S ribosomal subunit. Contacts proteins S9 and S11.

Functionally, one of the primary rRNA binding proteins, it binds directly to 16S rRNA where it nucleates assembly of the head domain of the 30S subunit. Is located at the subunit interface close to the decoding center, probably blocks exit of the E-site tRNA. This Pseudarthrobacter chlorophenolicus (strain ATCC 700700 / DSM 12829 / CIP 107037 / JCM 12360 / KCTC 9906 / NCIMB 13794 / A6) (Arthrobacter chlorophenolicus) protein is Small ribosomal subunit protein uS7.